The primary structure comprises 348 residues: Tripartite motif-containing protein 16-like protein (348 aa).

The B30.2/SPRY domain maps to 139–337 (YWTSKPEPST…RIVDLGEEPE (199 aa)).

It belongs to the TRIM/RBCC family.

Its subcellular location is the cytoplasm. The chain is Tripartite motif-containing protein 16-like protein (TRIM16L) from Homo sapiens (Human).